Here is a 330-residue protein sequence, read N- to C-terminus: Probable transposase for insertion sequence element ISH11 (330 aa).

The protein belongs to the transposase 11 family.

Its function is as follows. Involved in the transposition of the insertion sequence ISH11. The chain is Probable transposase for insertion sequence element ISH11 from Halobacterium salinarum (strain ATCC 29341 / DSM 671 / R1).